Here is a 272-residue protein sequence, read N- to C-terminus: Acetylglutamate kinase (272 aa).

Substrate is bound by residues 46-47 (GA), Arg-68, and Asn-166.

It belongs to the acetylglutamate kinase family. ArgB subfamily.

It is found in the cytoplasm. It carries out the reaction N-acetyl-L-glutamate + ATP = N-acetyl-L-glutamyl 5-phosphate + ADP. Its pathway is amino-acid biosynthesis; L-arginine biosynthesis; N(2)-acetyl-L-ornithine from L-glutamate: step 2/4. In terms of biological role, catalyzes the ATP-dependent phosphorylation of N-acetyl-L-glutamate. This Dehalococcoides mccartyi (strain ATCC BAA-2266 / KCTC 15142 / 195) (Dehalococcoides ethenogenes (strain 195)) protein is Acetylglutamate kinase.